The primary structure comprises 92 residues: Small ribosomal subunit protein uS19 (92 aa).

This sequence belongs to the universal ribosomal protein uS19 family.

In terms of biological role, protein S19 forms a complex with S13 that binds strongly to the 16S ribosomal RNA. The chain is Small ribosomal subunit protein uS19 from Neisseria gonorrhoeae (strain ATCC 700825 / FA 1090).